The following is a 455-amino-acid chain: MRSEWVARRRGQANVTQMHFARQGVITEEMEYVAQRENLPPELIRSEVARGRMIIPANINHTNLEPMCIGIASRCKVNANIGASPTSSGLAEELEKLKLAIKYGADTVMDLSTGGGDLDEIRTAIIQASPVPIGTVPIYQALESVHGKVEKLSAEDILHVIEKQAQQGVDYMTIHAGILIEYLPLVRHRLTGIVSRGGGILARWMLAHHKQNPLYTHFRDIIEIFKKYDVSFSLGDSLRPGCLHDASDEAQLAELKTLGQLTRMAWEHDVQVMVEGPGHVPMDQIEFNVRKQMEECDEAPFYVLGPLVTDIAAGYDHISSAIGAALAGWYGAAMLCYVTPKEHLGLPNAEDVRNGLIAYKIAAHAADIARHRPGARDRDDEMSRARYNFDWNRQFELSLDPERAREYHDETLPADIYKTAEFCSMCGPKFCPMQTKMDAEALSELEQFLAAQPTG.

Residues Asn-80, Met-109, Tyr-139, His-175, 195–197 (SRG), 236–239 (DSLR), and Glu-275 each bind substrate. His-279 is a binding site for Zn(2+). Tyr-302 is a substrate binding site. A Zn(2+)-binding site is contributed by His-343. [4Fe-4S] cluster contacts are provided by Cys-423, Cys-426, and Cys-431.

This sequence belongs to the ThiC family. It depends on [4Fe-4S] cluster as a cofactor.

The enzyme catalyses 5-amino-1-(5-phospho-beta-D-ribosyl)imidazole + S-adenosyl-L-methionine = 4-amino-2-methyl-5-(phosphooxymethyl)pyrimidine + CO + 5'-deoxyadenosine + formate + L-methionine + 3 H(+). It functions in the pathway cofactor biosynthesis; thiamine diphosphate biosynthesis. Functionally, catalyzes the synthesis of the hydroxymethylpyrimidine phosphate (HMP-P) moiety of thiamine from aminoimidazole ribotide (AIR) in a radical S-adenosyl-L-methionine (SAM)-dependent reaction. The chain is Phosphomethylpyrimidine synthase from Synechococcus sp. (strain JA-2-3B'a(2-13)) (Cyanobacteria bacterium Yellowstone B-Prime).